Reading from the N-terminus, the 586-residue chain is NADH-quinone oxidoreductase subunit C/D 2 (586 aa).

The tract at residues 1 to 173 (MKWVNKGTVE…RTDPPSHDFE (173 aa)) is NADH dehydrogenase I subunit C. The interval 197–586 (AELVLNWGPL…LDPVVGETDR (390 aa)) is NADH dehydrogenase I subunit D.

This sequence in the N-terminal section; belongs to the complex I 30 kDa subunit family. It in the C-terminal section; belongs to the complex I 49 kDa subunit family. In terms of assembly, NDH-1 is composed of 13 different subunits. Subunits NuoB, CD, E, F, and G constitute the peripheral sector of the complex.

It is found in the cell inner membrane. It carries out the reaction a quinone + NADH + 5 H(+)(in) = a quinol + NAD(+) + 4 H(+)(out). Functionally, NDH-1 shuttles electrons from NADH, via FMN and iron-sulfur (Fe-S) centers, to quinones in the respiratory chain. The immediate electron acceptor for the enzyme in this species is believed to be ubiquinone. Couples the redox reaction to proton translocation (for every two electrons transferred, four hydrogen ions are translocated across the cytoplasmic membrane), and thus conserves the redox energy in a proton gradient. The protein is NADH-quinone oxidoreductase subunit C/D 2 (nuoC2) of Aquifex aeolicus (strain VF5).